A 126-amino-acid chain; its full sequence is Large ribosomal subunit protein bL12 (126 aa).

This sequence belongs to the bacterial ribosomal protein bL12 family. Homodimer. Part of the ribosomal stalk of the 50S ribosomal subunit. Forms a multimeric L10(L12)X complex, where L10 forms an elongated spine to which 2 to 4 L12 dimers bind in a sequential fashion. Binds GTP-bound translation factors.

Functionally, forms part of the ribosomal stalk which helps the ribosome interact with GTP-bound translation factors. Is thus essential for accurate translation. This chain is Large ribosomal subunit protein bL12, found in Methylobacterium nodulans (strain LMG 21967 / CNCM I-2342 / ORS 2060).